The sequence spans 603 residues: Phosphoribosylformylglycinamidine synthase subunit PurL (603 aa).

His-32 is a catalytic residue. Tyr-35 and Lys-68 together coordinate ATP. Residue Glu-70 participates in Mg(2+) binding. Substrate contacts are provided by residues 71–74 and Arg-93; that span reads SHNH. Residue His-72 is the Proton acceptor of the active site. Position 94 (Asp-94) interacts with Mg(2+). Residues Asp-107 and 136 to 139 each bind ATP; that span reads GELR. Positions 189 and 208 each coordinate substrate. Asp-236 serves as a coordination point for Mg(2+). A substrate-binding site is contributed by 280-282; the sequence is ESQ. ATP is bound by residues Gly-388, Lys-429, Asn-442, and Gly-477. Asn-478 contacts Mg(2+). Ser-480 lines the substrate pocket. Residues Ser-549 and His-556 each coordinate ATP.

It belongs to the FGAMS family. Monomer. Part of the FGAM synthase complex composed of 1 PurL, 1 PurQ and 2 PurS subunits.

The protein resides in the cytoplasm. It catalyses the reaction N(2)-formyl-N(1)-(5-phospho-beta-D-ribosyl)glycinamide + L-glutamine + ATP + H2O = 2-formamido-N(1)-(5-O-phospho-beta-D-ribosyl)acetamidine + L-glutamate + ADP + phosphate + H(+). It participates in purine metabolism; IMP biosynthesis via de novo pathway; 5-amino-1-(5-phospho-D-ribosyl)imidazole from N(2)-formyl-N(1)-(5-phospho-D-ribosyl)glycinamide: step 1/2. Functionally, part of the phosphoribosylformylglycinamidine synthase complex involved in the purines biosynthetic pathway. Catalyzes the ATP-dependent conversion of formylglycinamide ribonucleotide (FGAR) and glutamine to yield formylglycinamidine ribonucleotide (FGAM) and glutamate. The FGAM synthase complex is composed of three subunits. PurQ produces an ammonia molecule by converting glutamine to glutamate. PurL transfers the ammonia molecule to FGAR to form FGAM in an ATP-dependent manner. PurS interacts with PurQ and PurL and is thought to assist in the transfer of the ammonia molecule from PurQ to PurL. The protein is Phosphoribosylformylglycinamidine synthase subunit PurL of Thermotoga maritima (strain ATCC 43589 / DSM 3109 / JCM 10099 / NBRC 100826 / MSB8).